The chain runs to 373 residues: MTDNSKIRVVVGMSGGVDSSVTALLLKEQGYDVIGVFMKNWDDTDEFGVCTATEDYKDVAAVADQIGIPYYSVNFEKEYWDRVFEYFLAEYRAGRTPNPDVMCNKEIKFKAFLDYAMTLGADYVATGHYAQVKRDENGKVHMLRGADNGKDQTYFLSQLSQEQLQKTLFPLGHLQKSEVREIAERAGLATAKKKDSTGICFIGEKNFKQFLSQYLPAQKGRMMTIDGRDMGEHAGLMYYTIGQRGGLGIGGQHGGDNQPWFVVGKDLSQNILYVGQGFYHEALMSNSLDASVIHFTREMPEEFTFECTAKFRYRQPDSHVTVHVRGDKAEVVFAEPQRAITPGQAVVFYDGKECLGGGMIDMAYKNGQPCQYI.

ATP is bound by residues 12-19 and Met-38; that span reads GMSGGVDS. Residues 98–100 are interaction with target base in tRNA; that stretch reads NPD. The active-site Nucleophile is Cys-103. Residues Cys-103 and Cys-200 are joined by a disulfide bond. Gly-127 is a binding site for ATP. An interaction with tRNA region spans residues 150–152; that stretch reads KDQ. The active-site Cysteine persulfide intermediate is Cys-200. Residues 312–313 are interaction with tRNA; it reads RY.

Belongs to the MnmA/TRMU family.

Its subcellular location is the cytoplasm. The catalysed reaction is S-sulfanyl-L-cysteinyl-[protein] + uridine(34) in tRNA + AH2 + ATP = 2-thiouridine(34) in tRNA + L-cysteinyl-[protein] + A + AMP + diphosphate + H(+). Its function is as follows. Catalyzes the 2-thiolation of uridine at the wobble position (U34) of tRNA, leading to the formation of s(2)U34. This Streptococcus pyogenes serotype M49 (strain NZ131) protein is tRNA-specific 2-thiouridylase MnmA.